Reading from the N-terminus, the 469-residue chain is MKFIIVLLLFFFFKVIDRVICVTPQKLICLKEDVYLGDFFFFLKRKKYIMYDVNIGEGFNLQKEIFYRLSLVIYNLNKKDKINIYYLVLPPWCYVTHWNIRKGNNLRWEFFFNTDIMKKVIPIIEYEEYEKLYGNYSDIMINSKYILDNYKEKSFLILPFEECNINVNRFKQFCKKCEHKYNVLYSGYCTTINTKQSECYSYNMISNYFITSILENLFLYNITSVLIKQSTNILVPFVNELYQSNLEDILLFNNKLLSYGNNYISNILKTNHYISSHLRYTDFKYISRYNVPPIHIALLKLLYIMFINNCRIIFIASDEKVEIQKVINKDFHQYKKHFYFYNNQNNLHEGEFSIIEQWICTRSYIFIGNIFSRFTMNINWERHLINKGQINQNIDLCSYHINDDNDQDIKNSYKKIVHIFNHKALQKIKNIYDNYSDRDKKYINTICYNFLSHFPNNRSIYRKEYITNT.

A signal peptide spans 1–18 (MKFIIVLLLFFFFKVIDR). Residues 56–60 (GEGFN), 277–279 (HLR), and 373–374 (RF) each bind GDP-beta-L-fucose. Residue glutamate 57 is the Proton acceptor of the active site.

This sequence belongs to the glycosyltransferase 68 family.

It is found in the endoplasmic reticulum. The catalysed reaction is L-seryl-[protein] + GDP-beta-L-fucose = 3-O-(alpha-L-fucosyl)-L-seryl-[protein] + GDP + H(+). The enzyme catalyses L-threonyl-[protein] + GDP-beta-L-fucose = 3-O-(alpha-L-fucosyl)-L-threonyl-[protein] + GDP + H(+). The protein operates within protein modification; protein glycosylation. Catalyzes the reaction that attaches fucose through an O-glycosidic linkage to a conserved serine or threonine residue in the consensus sequence C1-X-X-S/T-C2 of thrombospondin type I repeats (TSRs) where C1 and C2 are the first and second cysteines of the repeat, respectively. O-fucosylates sporozoite proteins CSP and TRAP. O-fucosylation regulates stability and intracellular trafficking of TRAP but not of CSP. Probably by regulating protein O-fucosylation, may play a role in parasite transmission to the mosquito vector and/or infection of the vertebrate host hepatocytes; however, POFUT2 involvement in transmission/infection is controversial. This chain is GDP-fucose protein O-fucosyltransferase 2, found in Plasmodium falciparum (isolate NF54).